Consider the following 349-residue polypeptide: Isopentenyl-diphosphate delta-isomerase (349 aa).

Substrate is bound at residue 6 to 7 (RK). Residues 62 to 64 (AMT), Ser93, and Asn122 each bind FMN. Gln152 contributes to the substrate binding site. Glu153 provides a ligand contact to Mg(2+). FMN-binding positions include Lys184, Thr214, 258–259 (GG), and 280–281 (AG).

This sequence belongs to the IPP isomerase type 2 family. In terms of assembly, homooctamer. Dimer of tetramers. FMN serves as cofactor. Requires NADPH as cofactor. The cofactor is Mg(2+).

It is found in the cytoplasm. The enzyme catalyses isopentenyl diphosphate = dimethylallyl diphosphate. Its function is as follows. Involved in the biosynthesis of isoprenoids. Catalyzes the 1,3-allylic rearrangement of the homoallylic substrate isopentenyl (IPP) to its allylic isomer, dimethylallyl diphosphate (DMAPP). In Bacillus cereus (strain ATCC 14579 / DSM 31 / CCUG 7414 / JCM 2152 / NBRC 15305 / NCIMB 9373 / NCTC 2599 / NRRL B-3711), this protein is Isopentenyl-diphosphate delta-isomerase.